Consider the following 591-residue polypeptide: CTP synthase 1 (591 aa).

Lys-100 is subject to N6-acetyllysine. Residues 300–554 (SIALVGKYTK…LASVGRLSHY (255 aa)) form the Glutamine amidotransferase type-1 domain. Residues Cys-399, His-526, and Glu-528 each act as for GATase activity in the active site. 8 positions are modified to phosphoserine: Ser-562, Ser-568, Ser-571, Ser-573, Ser-574, Ser-575, Ser-578, and Ser-587. The tract at residues 562–591 (SPRDTYSDRSGSSSPDSEITELKFPSINHD) is disordered. Low complexity predominate over residues 569-578 (DRSGSSSPDS).

The protein belongs to the CTP synthase family. Widely expressed.

Its subcellular location is the cytoplasm. It localises to the cytosol. The catalysed reaction is UTP + L-glutamine + ATP + H2O = CTP + L-glutamate + ADP + phosphate + 2 H(+). Its pathway is pyrimidine metabolism; CTP biosynthesis via de novo pathway; CTP from UDP: step 2/2. With respect to regulation, activated by GTP and inhibited by CTP. In terms of biological role, this enzyme is involved in the de novo synthesis of CTP, a precursor of DNA, RNA and phospholipids. Catalyzes the ATP-dependent amination of UTP to CTP with either L-glutamine or ammonia as a source of nitrogen. This enzyme and its product, CTP, play a crucial role in the proliferation of activated lymphocytes and therefore in immunity. This chain is CTP synthase 1, found in Homo sapiens (Human).